A 1061-amino-acid polypeptide reads, in one-letter code: Zinc finger protein ZFPM1 (1061 aa).

Residues 152-185 (VVNKDVFPCKDCGIWYRSERNLQAHLMYYCASRQ) form a CCHC FOG-type 1 zinc finger. Zn(2+) is bound by residues cysteine 160, cysteine 163, histidine 176, and cysteine 181. 3 consecutive C2H2-type zinc fingers follow at residues 204–228 (RICPFPQCKKSCPSTSSLEIHMRSH), 234–256 (FVCLICLSAFTTKANCERHLKVH), and 262–285 (GVCHGCGFISTTRDILYSHLVTNH). 2 disordered regions span residues 349–393 (PSAT…SEET) and 435–455 (TEMSSPTPGSSPVPNETGAAT). The segment covering 378-388 (SPISSSSSASS) has biased composition (low complexity). Residues 436 to 448 (EMSSPTPGSSPVP) show a composition bias toward polar residues. Residues 508–541 (SAVPKGATCFECEITFNNINNYYVHKRLYCSGRH) form a CCHC FOG-type 2 zinc finger. Zn(2+) contacts are provided by cysteine 516, cysteine 519, histidine 532, and cysteine 537. Disordered regions lie at residues 561–586 (ALASGFSSTEQEASPPQEDAGEESSA) and 599–630 (MDCEGAGSGHVSEGSQSPSSLDDPEEDPNRTV). The span at 565-574 (GFSSTEQEAS) shows a compositional bias: polar residues. The CCHC FOG-type 3 zinc finger occupies 623–656 (EEDPNRTVCGACNIRFSRHETYVVHKRYYCASRH). Cysteine 631, cysteine 634, histidine 647, and cysteine 652 together coordinate Zn(2+). A disordered region spans residues 661 to 681 (RRREVNKPGPPYTTQPTPRTR). Residues 736 to 742 (PIDLSKK) are interaction with CTBP. Residues 759–792 (APLADYHECTACRISFNSLESYLAHKKFSCPTAP) form a CCHC FOG-type 4 zinc finger. Positions 767, 770, 783, and 788 each coordinate Zn(2+). The C2H2-type 4 zinc-finger motif lies at 869–892 (TTCPYCPHNVIIRGDLLEHFRSVH). The segment at 917–1021 (RGQTSSASEN…MQPPKPSLIS (105 aa)) is disordered. 2 stretches are compositionally biased toward low complexity: residues 933–942 (VSSASPLQLP) and 954–972 (TTSSSSSVNGSPILTSTPR). A compositionally biased stretch (pro residues) spans 973–984 (PLLPTSPAPPSN). The segment at 1023-1056 (VPNGNHRYCRLCNIKFSSLSTFIAHKKYYCSSHA) adopts a CCHC FOG-type 5 zinc-finger fold. Zn(2+) contacts are provided by cysteine 1031, cysteine 1034, histidine 1047, and cysteine 1052.

It belongs to the FOG (Friend of GATA) family. In terms of assembly, interacts with corepressor CTBP. Interacts with the N-terminal zinc-finger of GATA1 and probably GATA2. In terms of tissue distribution, predominantly expressed in heart and brain. Also expressed in ventral blood island and adult spleen.

Its subcellular location is the nucleus. Transcription regulator that plays an central role in red blood cell differentiation. Essential cofactor that acts via the formation of a heterodimer with transcription factors of the GATA family GATA1 and GATA2. Such heterodimer can both activate or repress transcriptional activity, depending on the cell and promoter context. Acts as a repressor of red blood cells, probably by modulating activity of GATA1. In Xenopus laevis (African clawed frog), this protein is Zinc finger protein ZFPM1 (zfpm1).